Consider the following 221-residue polypeptide: Imidazoleglycerol-phosphate dehydratase (221 aa).

The protein belongs to the imidazoleglycerol-phosphate dehydratase family.

The enzyme catalyses D-erythro-1-(imidazol-4-yl)glycerol 3-phosphate = 3-(imidazol-4-yl)-2-oxopropyl phosphate + H2O. Its pathway is amino-acid biosynthesis; L-histidine biosynthesis; L-histidine from 5-phospho-alpha-D-ribose 1-diphosphate: step 6/9. This Kluyveromyces lactis (strain ATCC 8585 / CBS 2359 / DSM 70799 / NBRC 1267 / NRRL Y-1140 / WM37) (Yeast) protein is Imidazoleglycerol-phosphate dehydratase (HIS3).